The chain runs to 237 residues: uncharacterized protein (237 aa).

This is an uncharacterized protein from Methanocaldococcus jannaschii (strain ATCC 43067 / DSM 2661 / JAL-1 / JCM 10045 / NBRC 100440) (Methanococcus jannaschii).